The primary structure comprises 37 residues: Large ribosomal subunit protein bL36c (37 aa).

The protein belongs to the bacterial ribosomal protein bL36 family.

It localises to the plastid. Its subcellular location is the chloroplast. This chain is Large ribosomal subunit protein bL36c, found in Oenothera argillicola (Appalachian evening primrose).